A 514-amino-acid chain; its full sequence is 2-isopropylmalate synthase (514 aa).

The 263-residue stretch at 5 to 267 (LVIFDTTLRD…DTRIHTPEIL (263 aa)) folds into the Pyruvate carboxyltransferase domain. Mn(2+) contacts are provided by Asp-14, His-202, His-204, and Asn-238. Residues 394–514 (RLVALKVGTQ…GSKEHPQAHV (121 aa)) form a regulatory domain region.

The protein belongs to the alpha-IPM synthase/homocitrate synthase family. LeuA type 1 subfamily. In terms of assembly, homodimer. Mn(2+) serves as cofactor.

The protein resides in the cytoplasm. The catalysed reaction is 3-methyl-2-oxobutanoate + acetyl-CoA + H2O = (2S)-2-isopropylmalate + CoA + H(+). It functions in the pathway amino-acid biosynthesis; L-leucine biosynthesis; L-leucine from 3-methyl-2-oxobutanoate: step 1/4. Its function is as follows. Catalyzes the condensation of the acetyl group of acetyl-CoA with 3-methyl-2-oxobutanoate (2-ketoisovalerate) to form 3-carboxy-3-hydroxy-4-methylpentanoate (2-isopropylmalate). The protein is 2-isopropylmalate synthase of Hydrogenovibrio crunogenus (strain DSM 25203 / XCL-2) (Thiomicrospira crunogena).